Reading from the N-terminus, the 123-residue chain is Large ribosomal subunit protein uL14c (123 aa).

This sequence belongs to the universal ribosomal protein uL14 family. As to quaternary structure, part of the 50S ribosomal subunit.

The protein localises to the plastid. Its subcellular location is the chloroplast. Binds to 23S rRNA. This Sorghum bicolor (Sorghum) protein is Large ribosomal subunit protein uL14c.